We begin with the raw amino-acid sequence, 328 residues long: Endochitinase (328 aa).

A signal peptide spans 1–27; sequence MKKNRMMMMIWSVGVVWMLLLVGGSYG. Residues 28 to 68 enclose the Chitin-binding type-1 domain; it reads EQCGRQAGGALCPGGNCCSQFGWCGSTTDYCGPGCQSQCGG. 7 disulfide bridges follow: Cys30–Cys45, Cys39–Cys51, Cys44–Cys58, Cys62–Cys66, Cys97–Cys159, Cys170–Cys178, and Cys277–Cys309. Glu141 functions as the Proton donor in the catalytic mechanism. Residues 318–328 constitute a propeptide, removed in mature form; that stretch reads SLLLSDLVTSQ.

Belongs to the glycosyl hydrolase 19 family. Chitinase class I subfamily.

It is found in the vacuole. The enzyme catalyses Random endo-hydrolysis of N-acetyl-beta-D-glucosaminide (1-&gt;4)-beta-linkages in chitin and chitodextrins.. Functionally, defense against chitin-containing fungal pathogens. The polypeptide is Endochitinase (Phaseolus vulgaris (Kidney bean)).